The chain runs to 440 residues: D-serine dehydratase (440 aa).

Residue Lys116 is modified to N6-(pyridoxal phosphate)lysine.

Belongs to the serine/threonine dehydratase family. DsdA subfamily. Monomer. Requires pyridoxal 5'-phosphate as cofactor.

It carries out the reaction D-serine = pyruvate + NH4(+). The sequence is that of D-serine dehydratase from Salmonella arizonae (strain ATCC BAA-731 / CDC346-86 / RSK2980).